The sequence spans 350 residues: Protein-glutamate methylesterase/protein-glutamine glutaminase 1 (350 aa).

The Response regulatory domain maps to 3–121 (KVLIVEDSPV…RDYDIRARDL (119 aa)). Asp-54 is subject to 4-aspartylphosphate. Residues 148 to 342 (PASGEPDIGK…PPEKIARVLV (195 aa)) form the CheB-type methylesterase domain. Catalysis depends on residues Ser-170, His-197, and Asp-290.

The protein belongs to the CheB family. In terms of processing, phosphorylated by CheA. Phosphorylation of the N-terminal regulatory domain activates the methylesterase activity.

It is found in the cytoplasm. It carries out the reaction [protein]-L-glutamate 5-O-methyl ester + H2O = L-glutamyl-[protein] + methanol + H(+). It catalyses the reaction L-glutaminyl-[protein] + H2O = L-glutamyl-[protein] + NH4(+). In terms of biological role, involved in chemotaxis. Part of a chemotaxis signal transduction system that modulates chemotaxis in response to various stimuli. Catalyzes the demethylation of specific methylglutamate residues introduced into the chemoreceptors (methyl-accepting chemotaxis proteins or MCP) by CheR. Also mediates the irreversible deamidation of specific glutamine residues to glutamic acid. The chain is Protein-glutamate methylesterase/protein-glutamine glutaminase 1 from Syntrophus aciditrophicus (strain SB).